The sequence spans 375 residues: MAKRDFYEVLGVERGASEGDLKKAYRRLAMKYHPDRNPGDKESEDKFKEANEAYEVLSDTSKRAAYDQYGHAGVDPSMGGGGAGFGGANFSDIFGDVFSDFFGGGRGGSRSGGAQRGSDLRYTLELNLEEAVRGTTVSIRVPTLVNCKPCDGSGAKKGSTPSTCPTCGGIGQVRMQQGFFAVQQTCPRCHGQGKIITDPCNSCHGEGRVEEYKTLSVKVPAGVDTGDRIRLSGEGEAGTHGGPTGDLYVVINVREHDIFQRDGKHLYCEVPISYTDAALGGELEVPTLDGRVKLKIPEGTQTGKQFRLRGKGVAPVRGGAAGDLLCRVAVETPVNLSRRQRELLEELRDSLEGDSSHSPKASGWFEGVKRFFGDL.

Residues 5–70 enclose the J domain; sequence DFYEVLGVER…SKRAAYDQYG (66 aa). The CR-type zinc finger occupies 134 to 212; sequence GTTVSIRVPT…CHGEGRVEEY (79 aa). Residues cysteine 147, cysteine 150, cysteine 164, cysteine 167, cysteine 186, cysteine 189, cysteine 200, and cysteine 203 each coordinate Zn(2+). CXXCXGXG motif repeat units follow at residues 147–154, 164–171, 186–193, and 200–207; these read CKPCDGSG, CPTCGGIG, CPRCHGQG, and CNSCHGEG.

The protein belongs to the DnaJ family. As to quaternary structure, homodimer. It depends on Zn(2+) as a cofactor.

It localises to the cytoplasm. Its function is as follows. Participates actively in the response to hyperosmotic and heat shock by preventing the aggregation of stress-denatured proteins and by disaggregating proteins, also in an autonomous, DnaK-independent fashion. Unfolded proteins bind initially to DnaJ; upon interaction with the DnaJ-bound protein, DnaK hydrolyzes its bound ATP, resulting in the formation of a stable complex. GrpE releases ADP from DnaK; ATP binding to DnaK triggers the release of the substrate protein, thus completing the reaction cycle. Several rounds of ATP-dependent interactions between DnaJ, DnaK and GrpE are required for fully efficient folding. Also involved, together with DnaK and GrpE, in the DNA replication of plasmids through activation of initiation proteins. This chain is Chaperone protein DnaJ, found in Pseudomonas entomophila (strain L48).